Here is a 102-residue protein sequence, read N- to C-terminus: U7-agatoxin-Ao1a (102 aa).

Positions 1–19 (MTQAFFFLLLVSLVASTLS) are cleaved as a signal peptide. A propeptide spanning residues 20–39 (KEFNFCPRAIDEVCPVKEKR) is cleaved from the precursor. W101 carries the tryptophan amide modification.

The protein belongs to the venom protein 11 family. 02 (wap-2) subfamily. Contains 5 disulfide bonds. Expressed by the venom gland.

It is found in the secreted. The sequence is that of U7-agatoxin-Ao1a from Agelena orientalis (Funnel-web spider).